Reading from the N-terminus, the 161-residue chain is Monooxygenase AgnL5 (161 aa).

It belongs to the avfA family.

The protein operates within secondary metabolite biosynthesis. Monooxygenase; part of the gene cluster that mediates the biosynthesis of agnestins, dihydroxy-xanthone metabolites. The pathway begins with the assembly and cyclization of atrochrysone thioester by the non-reducing polyketide synthase Agnpks1. The atrochrysone carboxyl ACP thioesterase AgnL7 then breaks the thioester bond and releases the atrochrysone carboxylic acid as the first enzyme-free intermediate. The decarboxylase AgnL1 then catalyzes the concerted decarboxylation-elimination required to convert atochrysone carboxylic acid into emodin anthrone, which is further oxidized to emodin by the anthrone oxygenase AgnL2. Emodin then undergoes reduction catalyzed by the oxidoreductase AgnL4 to yield the dihydroquinone tautomer which is the substrate for reduction by the short chain dehydrogenase AgnL6 reduction to produce hydroxyketone, followed by AgnL8 dehydration and likely spontaneous autoxidation to chrysophanol. Baeyer-Villiger oxidation by the oxidase AgnL3 leads to monodictyphenone via cleavage of the C-10/C-10a bond of chrysophanol. Alternative cleavage at the C-4a/C-10 bond of chrysophanol also leads to the formation some cephalone F. Further conversion to agnestins A and B, requires reduction to dihydro-monodictyphenone, oxidation to agnestin C probably via an epoxide, and rearrangement to either agnestin A or agnestin B directly, although agnestin A or agnestin B can also interconvert. Within the cluster, AgnR1 is the only unassigned oxidoreductase present which could be involved in this conversion. However, AgnR1 seems not to be involved in this step, and thus genes involved in the proposed oxidation/reduction may be located elsewhere on the genome. Further agnestin A derivatives are probably formed by spontaneous decarboxylations, dehydrations and methanolysis reactions. This is Monooxygenase AgnL5 from Paecilomyces divaricatus (Penicillium divaricatum).